The following is a 1008-amino-acid chain: Envelopment polyprotein (1008 aa).

A signal peptide spans 1–17 (MVRTYLLLLLLCGPATP). Residues 18–394 (FFNHLMDVTR…NWANIHCFSK (377 aa)) are Lumenal-facing. N-linked (GlcNAc...) asparagine; by host glycans are attached at residues Asn34, Asn70, and Asn108. Cystine bridges form between Cys138–Cys269, Cys156–Cys166, Cys206–Cys247, Cys216–Cys226, Cys233–Cys238, Cys292–Cys295, Cys299–Cys368, and Cys319–Cys324. N-linked (GlcNAc...) asparagine; by host glycosylation occurs at Asn208. Residues 395 to 415 (EQVLILVAVSSLCILLLASVL) traverse the membrane as a helical segment. Topologically, residues 416–496 (RALKVIATFT…VRQKMFNLTR (81 aa)) are cytoplasmic. The tract at residues 419-465 (KVIATFTWKIIKPFWWILSLLCRTCSKRLNKRAERLKESIHSLEEGL) is golgi retention signal. Positions 461-465 (LEEGL) are important for correct targeting of the glycoproteins to the Golgi complex but not for heterodimerization. Residues 497 to 513 (LSPVVVGMLCLACPVES) are internal signal sequence for glycoprotein C. 12 disulfides stabilise this stretch: Cys514-Cys555, Cys527-Cys537, Cys580-Cys677, Cys595-Cys789, Cys601-Cys650, Cys607-Cys657, Cys612-Cys639, Cys643-Cys648, Cys728-Cys742, Cys758-Cys771, Cys851-Cys924, and Cys861-Cys864. Residues 514–977 (CSDSISVTAS…GWFKASWLRA (464 aa)) are Lumenal-facing. Residues 601 to 607 (CHLMGAC) form a fusion loop region. Residues 644-655 (GGALCQCFNMRP) are fusion loop. Residues Asn691 and Asn696 are each glycosylated (N-linked (GlcNAc...) asparagine; by host). N-linked (GlcNAc...) asparagine; by host glycans are attached at residues Asn912 and Asn949. A helical membrane pass occupies residues 978–998 (IWAILGGTVSLIIGVVIIYMV). Topologically, residues 999 to 1008 (FTLCLKVKKS) are cytoplasmic.

The protein belongs to the phlebovirus envelope glycoprotein family. In terms of assembly, homodimer. Heterodimer with glycoprotein C. Homotrimer (postfusion). Heterodimer with glycoprotein N. Homotrimer (postfusion). Specific enzymatic cleavages in vivo yield mature proteins including glycoprotein C and glycoprotein N. Post-translationally, the cytoplasmic tail is Palmitoylated. In terms of processing, glycosylated. Contains principally poly-N-acetyllactosamine glycans. Glycosylated. Contains principally oligomannose-type glycans that can attach to host CD209/DC-SIGN. Post-translationally, palmitoylated.

Its subcellular location is the virion membrane. The protein localises to the host Golgi apparatus membrane. It is found in the host endoplasmic reticulum membrane. Structural component of the virion that interacts with glycoprotein C. It shields the hydrophobic fusion loops of the glycoprotein C, preventing premature fusion. The glycoprotein protrusions are arranged on an icosahedral lattice, with T=12 triangulation. They are able to attach the virion to the host cell receptor CD209/DC-SIGN and to promote fusion of membranes with the late endosome after endocytosis of the virion. Plays a role in the packaging of ribonucleoproteins during virus assembly. Its function is as follows. Structural component of the virion that interacts with glycoprotein N. Acts as a class II fusion protein that is activated upon acidification and subsequent repositioning of the glycoprotein N. The glycoprotein protrusions are arranged on an icosahedral lattice, with T=12 triangulation. They are able to attach the virion to the host cell receptor CD209/DC-SIGN and to promote fusion of membranes with the late endosome after endocytosis of the virion. The sequence is that of Envelopment polyprotein (GP) from Homo sapiens (Human).